The sequence spans 367 residues: Embryonic developmental protein tofu-6 (367 aa).

The RRM domain maps to 13–92; it reads AGFHIRNIPK…FTLKVTDHKN (80 aa). The interval 298–345 is required for ife-3 interaction; that stretch reads KSILADRLQRKGVCEYLPRSQQPHYAYSRETLLQHNNSGVTAQISNDA.

In terms of assembly, component of the pid-1 variant of the PETISCO complex (also called the pid-3, erh-2, tofu-6, and ife-3 small RNA complex) containing at least pid-1, tofu-6, ife-3, pid-3, and erh-2, which is required for the biogenesis of 21 nucleotide PIWI-interacting RNAs (piRNAs) that possess a uracil residue at the 5'-end (also called 21U-RNAs). Within the pid-1 variant of the PETISCO complex interacts with pid-1. Component of the tost-1 variant of the PETISCO complex (also called the pid-3, erh-2, tofu-6, and ife-3 small RNA complex) containing at least tost-1, tofu-6, ife-3, pid-3, and erh-2, which plays an essential role in embryogenesis. Within the tost-1 variant of the PETISCO complex interacts with tost-1. Within the pid-1 and tost-1 variants of the PETISCO complexes interacts (via C-terminus) with ife-3. Within the pid-1 and tost-1 variants of the PETISCO complexes interacts (via the RRM domain) with pid-3. Within the pid-1 and tost-1 variants of the PETISCO complexes interacts (via the RRM domain) with erh-2. In contrast to the pid-1 variant of the PETISCO complex, the tost-1 variant of the PETISCO complex plays a minor role in the biogenesis of 21U-RNAs. Interacts (via residues 120-314) with the PUCH complex subunit tofu-1 (via residues 82-172); the interaction between the PETISCO and PUCH complex members enhances piRNA production in vivo. Expression is restricted to the germline (at protein level).

The protein resides in the cytoplasm. The protein localises to the perinuclear region. It localises to the nucleus. Functionally, component of the pid-1 and tost-1 variants of the PETISCO complexes, which have roles in the biogenesis of a class of 21 nucleotide PIWI-interacting RNAs (piRNAs) that possess a uracil residue at the 5'-end (also called 21U-RNAs) and embryogenesis, respectively. Promotes the biogenesis of 21U-RNAs. Mediates the interaction between the PETISCO complex and the PUCH complex, the endoribonuclease complex processing the 5'-end of precursor piRNAs, thereby enhancing mature piRNA production. Required for chromosome segregation and cell division in early embryos. May have a role in DNA replication. This chain is Embryonic developmental protein tofu-6, found in Caenorhabditis elegans.